Reading from the N-terminus, the 335-residue chain is Holliday junction branch migration complex subunit RuvB (335 aa).

The large ATPase domain (RuvB-L) stretch occupies residues 2-184; that stretch reads ADERIVSAEN…FGIVEHMAYY (183 aa). Residues Leu23, Arg24, Gly65, Lys68, Thr69, Thr70, 131–133, Arg174, Tyr184, and Arg221 each bind ATP; that span reads EDF. Thr69 lines the Mg(2+) pocket. Positions 185 to 255 are small ATPAse domain (RuvB-S); the sequence is TEADLMDIVQ…IADHALSQLQ (71 aa). The interval 258–335 is head domain (RuvB-H); that stretch reads IRGLDGVDRK…AHLGMPYPEK (78 aa). Arg313 and Arg318 together coordinate DNA.

The protein belongs to the RuvB family. In terms of assembly, homohexamer. Forms an RuvA(8)-RuvB(12)-Holliday junction (HJ) complex. HJ DNA is sandwiched between 2 RuvA tetramers; dsDNA enters through RuvA and exits via RuvB. An RuvB hexamer assembles on each DNA strand where it exits the tetramer. Each RuvB hexamer is contacted by two RuvA subunits (via domain III) on 2 adjacent RuvB subunits; this complex drives branch migration. In the full resolvosome a probable DNA-RuvA(4)-RuvB(12)-RuvC(2) complex forms which resolves the HJ.

The protein resides in the cytoplasm. It catalyses the reaction ATP + H2O = ADP + phosphate + H(+). The RuvA-RuvB-RuvC complex processes Holliday junction (HJ) DNA during genetic recombination and DNA repair, while the RuvA-RuvB complex plays an important role in the rescue of blocked DNA replication forks via replication fork reversal (RFR). RuvA specifically binds to HJ cruciform DNA, conferring on it an open structure. The RuvB hexamer acts as an ATP-dependent pump, pulling dsDNA into and through the RuvAB complex. RuvB forms 2 homohexamers on either side of HJ DNA bound by 1 or 2 RuvA tetramers; 4 subunits per hexamer contact DNA at a time. Coordinated motions by a converter formed by DNA-disengaged RuvB subunits stimulates ATP hydrolysis and nucleotide exchange. Immobilization of the converter enables RuvB to convert the ATP-contained energy into a lever motion, pulling 2 nucleotides of DNA out of the RuvA tetramer per ATP hydrolyzed, thus driving DNA branch migration. The RuvB motors rotate together with the DNA substrate, which together with the progressing nucleotide cycle form the mechanistic basis for DNA recombination by continuous HJ branch migration. Branch migration allows RuvC to scan DNA until it finds its consensus sequence, where it cleaves and resolves cruciform DNA. The chain is Holliday junction branch migration complex subunit RuvB from Latilactobacillus sakei subsp. sakei (strain 23K) (Lactobacillus sakei subsp. sakei).